We begin with the raw amino-acid sequence, 425 residues long: 3-phosphoshikimate 1-carboxyvinyltransferase (425 aa).

The 3-phosphoshikimate site is built by Lys-22, Ser-23, and Arg-27. Lys-22 lines the phosphoenolpyruvate pocket. Phosphoenolpyruvate contacts are provided by Gly-95 and Arg-123. Residues Ser-169, Ser-170, Gln-171, Ser-197, Asp-313, Asn-336, and Lys-340 each coordinate 3-phosphoshikimate. Gln-171 is a binding site for phosphoenolpyruvate. Asp-313 acts as the Proton acceptor in catalysis. Arg-344, Arg-386, and Lys-411 together coordinate phosphoenolpyruvate.

Belongs to the EPSP synthase family. In terms of assembly, monomer.

The protein resides in the cytoplasm. It carries out the reaction 3-phosphoshikimate + phosphoenolpyruvate = 5-O-(1-carboxyvinyl)-3-phosphoshikimate + phosphate. It functions in the pathway metabolic intermediate biosynthesis; chorismate biosynthesis; chorismate from D-erythrose 4-phosphate and phosphoenolpyruvate: step 6/7. Catalyzes the transfer of the enolpyruvyl moiety of phosphoenolpyruvate (PEP) to the 5-hydroxyl of shikimate-3-phosphate (S3P) to produce enolpyruvyl shikimate-3-phosphate and inorganic phosphate. The protein is 3-phosphoshikimate 1-carboxyvinyltransferase of Pseudoalteromonas translucida (strain TAC 125).